A 203-amino-acid chain; its full sequence is Secreted phosphoprotein 24 (203 aa).

Positions 1–23 are cleaved as a signal peptide; sequence MEKMAMKMLVIFVLGMNHWTCTG. 2 disulfides stabilise this stretch: C86–C97 and C110–C128. A Phosphoserine modification is found at S90. Phosphoserine is present on residues S138, S139, S166, and S175.

This sequence belongs to the SPP2 family. In terms of processing, multiply phosphorylated at serine residues in Ser-X-Glu/Ser(P) sequences, a recognition motif for phosphorylation by secretory pathway protein kinase. Phosphorylation sites are present in the extracellular medium. In terms of tissue distribution, in liver and bone but not in heart, lung, kidney, or spleen.

The protein resides in the secreted. In terms of biological role, could coordinate an aspect of bone turnover. In Bos taurus (Bovine), this protein is Secreted phosphoprotein 24 (SPP2).